The chain runs to 333 residues: Sphingomyelinase C (333 aa).

The signal sequence occupies residues 1 to 27; the sequence is MKGKLLKGVLSFGIGLGVLYGGSSVQA. C150 and C186 are disulfide-bonded.

This sequence belongs to the neutral sphingomyelinase family. Mg(2+) is required as a cofactor.

It localises to the secreted. The catalysed reaction is a sphingomyelin + H2O = phosphocholine + an N-acylsphing-4-enine + H(+). With respect to regulation, activated by cobalt and manganese ions. Its function is as follows. Required, with sphingomyelinase, to effect target cell lysis (hemolysis). The protein is Sphingomyelinase C (sph) of Bacillus cereus.